The following is a 270-amino-acid chain: Tryptophan synthase alpha chain (270 aa).

Residues Glu60 and Asp71 each act as proton acceptor in the active site.

Belongs to the TrpA family. In terms of assembly, tetramer of two alpha and two beta chains.

The enzyme catalyses (1S,2R)-1-C-(indol-3-yl)glycerol 3-phosphate + L-serine = D-glyceraldehyde 3-phosphate + L-tryptophan + H2O. It functions in the pathway amino-acid biosynthesis; L-tryptophan biosynthesis; L-tryptophan from chorismate: step 5/5. Functionally, the alpha subunit is responsible for the aldol cleavage of indoleglycerol phosphate to indole and glyceraldehyde 3-phosphate. The polypeptide is Tryptophan synthase alpha chain (Deinococcus radiodurans (strain ATCC 13939 / DSM 20539 / JCM 16871 / CCUG 27074 / LMG 4051 / NBRC 15346 / NCIMB 9279 / VKM B-1422 / R1)).